Here is a 475-residue protein sequence, read N- to C-terminus: Exodeoxyribonuclease I (475 aa).

In terms of domain architecture, Exonuclease spans 13–192 (FHDYETFGTH…AMADVYATIA (180 aa)). Positions 15 and 17 each coordinate Mg(2+). Substrate-binding residues include E17 and R165. D186 contacts Mg(2+). The 154-residue stretch at 202–355 (PRLFDYLFTH…KVVAIFAEAE (154 aa)) folds into the ExoI SH3-like domain. Residues 358–475 (TPSDNVDAQL…ALWQYAEEIV (118 aa)) enclose the ExoI C-terminal domain.

As to quaternary structure, monomer. Interacts with ssb (via C-terminus); this interaction stimulates the exonuclease activity by recruiting the enzyme to its substrate. Mg(2+) serves as cofactor.

It carries out the reaction Exonucleolytic cleavage in the 3'- to 5'-direction to yield nucleoside 5'-phosphates.. Its activity is regulated as follows. Inhibited by 10 mM EDTA. Degrades single-stranded DNA (ssDNA) in a highly processive manner. Also functions as a DNA deoxyribophosphodiesterase that releases deoxyribose-phosphate moieties following the cleavage of DNA at an apurinic/apyrimidinic (AP) site by either an AP endonuclease or AP lyase. The polypeptide is Exodeoxyribonuclease I (sbcB) (Escherichia coli (strain K12)).